A 586-amino-acid chain; its full sequence is Protein cereblon (586 aa).

Disordered stretches follow at residues 1 to 114 (MDDE…LPRW) and 158 to 194 (SQER…IDIG). A compositionally biased stretch (basic and acidic residues) spans 14–37 (GRDEDVQLEDHSQAQGLQDRRVDA). Residues 75 to 85 (MVEDGLQDDTA) show a composition bias toward acidic residues. Residues 86–96 (SEGSHPSSDMS) are compositionally biased toward polar residues. Residues 159 to 168 (QERRRSRTSE) show a composition bias toward basic and acidic residues. Residues 170–179 (TSQEDVEQPE) show a composition bias toward acidic residues. Positions 180–190 (DPPPQQPPRPP) are enriched in pro residues. The Lon N-terminal domain maps to 226–452 (HMLIFLHQHI…LIKSTFTDES (227 aa)). Positions 451–560 (ESLFFCRYCN…LAGSSVRIGK (110 aa)) constitute a CULT domain. Zn(2+) is bound by residues Cys456, Cys459, Cys525, and Cys528.

Belongs to the CRBN family. Likely a component of a DCX (DDB1-CUL4-X-box) protein ligase complex. May interact with pic/DDB1. Ubiquitinated.

Its subcellular location is the nucleus. It functions in the pathway protein modification; protein ubiquitination. Substrate recognition component of a DCX (DDB1-CUL4-X-box) E3 protein ligase complex that mediates the ubiquitination and subsequent proteasomal degradation of target proteins. Has an essential role in mediating growth by negatively regulating insulin signaling. It also has a role in maintaining presynaptic function in the neuromuscular junction synapses of third-instar larvae. This Drosophila erecta (Fruit fly) protein is Protein cereblon.